Reading from the N-terminus, the 78-residue chain is DNA-directed RNA polymerase subunit omega (78 aa).

This sequence belongs to the RNA polymerase subunit omega family. As to quaternary structure, in cyanobacteria the RNAP catalytic core is composed of 2 alpha, 1 beta, 1 beta', 1 gamma and 1 omega subunit. When a sigma factor is associated with the core the holoenzyme is formed, which can initiate transcription.

The enzyme catalyses RNA(n) + a ribonucleoside 5'-triphosphate = RNA(n+1) + diphosphate. Its function is as follows. Promotes RNA polymerase assembly. Latches the N- and C-terminal regions of the beta' subunit thereby facilitating its interaction with the beta and alpha subunits. This Prochlorococcus marinus (strain AS9601) protein is DNA-directed RNA polymerase subunit omega.